Reading from the N-terminus, the 434-residue chain is Chaperone SurA (434 aa).

The signal sequence occupies residues 1 to 22 (MKHSKKIIFALLALAMSNTSMA). PpiC domains are found at residues 173–274 (DVEF…KVVD) and 283–383 (VEEV…QLES).

The protein localises to the periplasm. The enzyme catalyses [protein]-peptidylproline (omega=180) = [protein]-peptidylproline (omega=0). Chaperone involved in the correct folding and assembly of outer membrane proteins. Recognizes specific patterns of aromatic residues and the orientation of their side chains, which are found more frequently in integral outer membrane proteins. May act in both early periplasmic and late outer membrane-associated steps of protein maturation. The protein is Chaperone SurA of Shewanella frigidimarina (strain NCIMB 400).